The chain runs to 479 residues: Poly(A) polymerase catalytic subunit (479 aa).

Residues Asp-202 and Asp-204 contribute to the active site. Residues Asp-202, Asp-204, and Asp-253 each coordinate Ca(2+).

The protein belongs to the poxviridae poly(A) polymerase catalytic subunit family. As to quaternary structure, heterodimer of a large (catalytic) subunit and a small (regulatory) subunit.

It carries out the reaction RNA(n) + ATP = RNA(n)-3'-adenine ribonucleotide + diphosphate. Its function is as follows. Polymerase that creates the 3'-poly(A) tail of mRNA's. This chain is Poly(A) polymerase catalytic subunit (OPG063), found in Homo sapiens (Human).